A 679-amino-acid chain; its full sequence is UvrABC system protein B (679 aa).

In terms of domain architecture, Helicase ATP-binding spans 25–190 (EGVNQGQRYQ…SRNDFDITRG (166 aa)). An ATP-binding site is contributed by 38–45 (GATGTGKT). The Beta-hairpin signature appears at 91-114 (YYDYYQPEAYVPVSDTYIAKTASI). The 163-residue stretch at 429-591 (QVDDLLAEIR…IVPRPAGKRA (163 aa)) folds into the Helicase C-terminal domain. The UVR domain occupies 639–674 (PELIDQLETKMKEAAKNLNFEEAASLRDRIKKFRQK).

Belongs to the UvrB family. As to quaternary structure, forms a heterotetramer with UvrA during the search for lesions. Interacts with UvrC in an incision complex.

Its subcellular location is the cytoplasm. The UvrABC repair system catalyzes the recognition and processing of DNA lesions. A damage recognition complex composed of 2 UvrA and 2 UvrB subunits scans DNA for abnormalities. Upon binding of the UvrA(2)B(2) complex to a putative damaged site, the DNA wraps around one UvrB monomer. DNA wrap is dependent on ATP binding by UvrB and probably causes local melting of the DNA helix, facilitating insertion of UvrB beta-hairpin between the DNA strands. Then UvrB probes one DNA strand for the presence of a lesion. If a lesion is found the UvrA subunits dissociate and the UvrB-DNA preincision complex is formed. This complex is subsequently bound by UvrC and the second UvrB is released. If no lesion is found, the DNA wraps around the other UvrB subunit that will check the other stand for damage. This is UvrABC system protein B from Prochlorococcus marinus (strain MIT 9303).